The primary structure comprises 156 residues: Endogenous retrovirus group K member 6 Pro protein (156 aa).

The region spanning 21-96 (FEGLVDTGAD…IPLNLWGRDL (76 aa)) is the Peptidase A2 domain. D26 is a catalytic residue. The 46-residue stretch at 111–156 (YSPTSQKIMTKMGYIPGKGLGKNEDGIKIPVEAKINQEREGIGNPC) folds into the G-patch domain.

The protein belongs to the peptidase A2 family. HERV class-II K(HML-2) subfamily. Active as a homodimer. Autoproteolytically processed at the N-terminus. Expected C-terminal autoprocessing not detected. The sequence shown is that of the processed Pro protein.

The enzyme catalyses Processing at the authentic HIV-1 PR recognition site and release of the mature p17 matrix and the p24 capsid protein, as a result of the cleavage of the -SQNY-|-PIVQ- cleavage site.. Functionally, retroviral proteases have roles in the processing of the primary translation products and the maturation of the viral particle. Endogenous Pro proteins may have kept, lost or modified their original function during evolution. This Homo sapiens (Human) protein is Endogenous retrovirus group K member 6 Pro protein (ERVK-6).